Consider the following 364-residue polypeptide: Aminomethyltransferase (364 aa).

The protein belongs to the GcvT family. As to quaternary structure, the glycine cleavage system is composed of four proteins: P, T, L and H.

It catalyses the reaction N(6)-[(R)-S(8)-aminomethyldihydrolipoyl]-L-lysyl-[protein] + (6S)-5,6,7,8-tetrahydrofolate = N(6)-[(R)-dihydrolipoyl]-L-lysyl-[protein] + (6R)-5,10-methylene-5,6,7,8-tetrahydrofolate + NH4(+). In terms of biological role, the glycine cleavage system catalyzes the degradation of glycine. The protein is Aminomethyltransferase of Thermotoga maritima (strain ATCC 43589 / DSM 3109 / JCM 10099 / NBRC 100826 / MSB8).